The sequence spans 250 residues: F-box only protein 17 (250 aa).

One can recognise an F-box domain in the interval 15 to 62 (HMALAELPPELLLQVLSHVPPRALVTRCRPVCRAWRDLVDGPSVWLLQ). In terms of domain architecture, FBA spans 99 to 250 (FCLLAPLGRN…GLLQGLSRLH (152 aa)).

Part of a SCF (SKP1-cullin-F-box) protein ligase complex. Interacts with SKP1 and CUL1.

Its function is as follows. Substrate-recognition component of the SCF (SKP1-CUL1-F-box protein)-type E3 ubiquitin ligase complex. Able to recognize and bind denatured glycoproteins, which are modified with complex-type oligosaccharides. Also recognizes sulfated glycans. Does not bind high-mannose glycoproteins. The protein is F-box only protein 17 (Fbxo17) of Rattus norvegicus (Rat).